Here is a 59-residue protein sequence, read N- to C-terminus: Large ribosomal subunit protein bL32c (59 aa).

Residues 1 to 19 show a composition bias toward basic residues; it reads MAVPKKRTSKAKKNARKAN. Residues 1-24 are disordered; it reads MAVPKKRTSKAKKNARKANWKNQA.

This sequence belongs to the bacterial ribosomal protein bL32 family.

It is found in the plastid. The protein localises to the chloroplast. This is Large ribosomal subunit protein bL32c (rpl32) from Porphyra purpurea (Red seaweed).